Reading from the N-terminus, the 444-residue chain is Glutamate dehydrogenase (444 aa).

Lys124 is a catalytic residue.

Belongs to the Glu/Leu/Phe/Val dehydrogenases family. In terms of assembly, homohexamer.

The catalysed reaction is L-glutamate + NAD(+) + H2O = 2-oxoglutarate + NH4(+) + NADH + H(+). It carries out the reaction L-glutamate + NADP(+) + H2O = 2-oxoglutarate + NH4(+) + NADPH + H(+). The chain is Glutamate dehydrogenase (gdhA) from Bacteroides thetaiotaomicron (strain ATCC 29148 / DSM 2079 / JCM 5827 / CCUG 10774 / NCTC 10582 / VPI-5482 / E50).